The primary structure comprises 325 residues: Pseudouridylate synthase TRUB2, mitochondrial (325 aa).

The Nucleophile role is filled by aspartate 101. Positions 292–325 (QTEGVSRGNPDREAAEGPIPGPSRGAEGEGELRA) are disordered.

This sequence belongs to the pseudouridine synthase TruB family.

The protein resides in the mitochondrion matrix. The catalysed reaction is a uridine in mRNA = a pseudouridine in mRNA. The enzyme catalyses uridine(55) in tRNA = pseudouridine(55) in tRNA. Functionally, minor enzyme contributing to the isomerization of uridine to pseudouridine (pseudouridylation) of specific mitochondrial mRNAs (mt-mRNAs) such as COXI and COXIII mt-mRNAs, modulating the efficiency of mitochondrial protein synthesis without changes in transcript abundance or stability. Also catalyzes pseudouridylation of some tRNAs, including synthesis of pseudouridine(55) from uracil-55, in the psi GC loop of a subset of tRNAs. This Xenopus tropicalis (Western clawed frog) protein is Pseudouridylate synthase TRUB2, mitochondrial.